Here is a 292-residue protein sequence, read N- to C-terminus: Glutamyl-Q tRNA(Asp) synthetase (292 aa).

L-glutamate-binding positions include 9–13 and glutamate 45; that span reads RFAPS. The 'HIGH' region signature appears at 12 to 22; the sequence is PSPSGPLHAGS. Residues cysteine 99, cysteine 101, tyrosine 121, and cysteine 125 each coordinate Zn(2+). L-glutamate-binding residues include tyrosine 184 and arginine 202. Residues 240 to 244 carry the 'KMSKS' region motif; it reads KLSKQ. Lysine 243 contacts ATP.

It belongs to the class-I aminoacyl-tRNA synthetase family. GluQ subfamily. Requires Zn(2+) as cofactor.

Catalyzes the tRNA-independent activation of glutamate in presence of ATP and the subsequent transfer of glutamate onto a tRNA(Asp). Glutamate is transferred on the 2-amino-5-(4,5-dihydroxy-2-cyclopenten-1-yl) moiety of the queuosine in the wobble position of the QUC anticodon. The protein is Glutamyl-Q tRNA(Asp) synthetase of Verminephrobacter eiseniae (strain EF01-2).